We begin with the raw amino-acid sequence, 295 residues long: Glycine N-acyltransferase-like protein Keg1 (295 aa).

K41 carries the post-translational modification N6-acetyllysine; alternate. The residue at position 41 (K41) is an N6-succinyllysine; alternate. K43 carries the post-translational modification N6-acetyllysine. At K48 the chain carries N6-acetyllysine; alternate. N6-succinyllysine; alternate is present on K48. 2 positions are modified to N6-acetyllysine: K80 and K83. An N6-acetyllysine; alternate mark is found at K124, K128, and K140. K124, K128, and K140 each carry N6-succinyllysine; alternate. Residue K150 is modified to N6-acetyllysine. K255 carries the N6-acetyllysine; alternate modification. N6-succinyllysine; alternate is present on K255.

This sequence belongs to the glycine N-acyltransferase family. As to quaternary structure, binds to microtubules.

The protein localises to the cytoplasm. It is found in the cytoskeleton. The protein resides in the microtubule organizing center. It localises to the centrosome. It carries out the reaction an acyl-CoA + glycine = an N-acylglycine + CoA + H(+). In terms of biological role, acyltransferase which transfers the acyl group to the N-terminus of glycine. Can conjugate a multitude of substrates to form a variety of N-acylglycines. This is Glycine N-acyltransferase-like protein Keg1 (Keg1) from Mus musculus (Mouse).